Here is a 171-residue protein sequence, read N- to C-terminus: MNHFELFGLPSQFQLDGSLLSSKFRELQKRFHPDNFATASERDRLMSVQKAAQINDAYQVLKHPISRAEYILAEQGMEIRGEQQTMQDPMFLMEQMELREELEDIADCSDPESALFDFDSKVSKMYKQHLASVEQELNDGLWAEAADRVRKLKFIAKLKNEIELVEDKLLG.

Positions 2 to 74 (NHFELFGLPS…ISRAEYILAE (73 aa)) constitute a J domain.

Belongs to the HscB family. In terms of assembly, interacts with HscA and stimulates its ATPase activity.

Co-chaperone involved in the maturation of iron-sulfur cluster-containing proteins. Seems to help targeting proteins to be folded toward HscA. The sequence is that of Co-chaperone protein HscB homolog from Vibrio parahaemolyticus serotype O3:K6 (strain RIMD 2210633).